The primary structure comprises 879 residues: Leucine--tRNA ligase (879 aa).

The 'HIGH' region motif lies at 43-53; sequence PYPSGRIHMGH. The 'KMSKS' region signature appears at 636–640; the sequence is KMSKS. Lys-639 is a binding site for ATP.

It belongs to the class-I aminoacyl-tRNA synthetase family.

It localises to the cytoplasm. It catalyses the reaction tRNA(Leu) + L-leucine + ATP = L-leucyl-tRNA(Leu) + AMP + diphosphate. This chain is Leucine--tRNA ligase, found in Afipia carboxidovorans (strain ATCC 49405 / DSM 1227 / KCTC 32145 / OM5) (Oligotropha carboxidovorans).